Consider the following 372-residue polypeptide: Homoserine dehydrogenase (372 aa).

Residues V13, G15, V16, and T99 each coordinate NAD(+). NADP(+) contacts are provided by V16 and T99. The NADPH site is built by V16, T99, S100, and K123. Residue K123 participates in NADP(+) binding. Positions 150, 153, 155, and 157 each coordinate Na(+). NADP(+)-binding residues include G216 and E219. L-homoserine-binding residues include E219 and D230. K234 serves as the catalytic Proton donor. Residue G352 participates in NAD(+) binding. G352 is an NADP(+) binding site. Residue G352 participates in NADPH binding.

It belongs to the homoserine dehydrogenase family. As to quaternary structure, homodimer. A metal cation serves as cofactor.

It carries out the reaction L-homoserine + NADP(+) = L-aspartate 4-semialdehyde + NADPH + H(+). The enzyme catalyses L-homoserine + NAD(+) = L-aspartate 4-semialdehyde + NADH + H(+). The protein operates within amino-acid biosynthesis; L-methionine biosynthesis via de novo pathway; L-homoserine from L-aspartate: step 3/3. Its pathway is amino-acid biosynthesis; L-threonine biosynthesis; L-threonine from L-aspartate: step 3/5. Catalyzes the conversion of L-aspartate-beta-semialdehyde (L-Asa) to L-homoserine (L-Hse), the third step in the biosynthesis of amino acids that derive from aspartate (the aspartate family of amino acids), including methioinine and threonine, the latter of which is a precursor to isoleucine; production of homoserine leads to a branch-point in the pathway as it can either be O-phosphorylated for processing to threonine, or O-acylated for processing to methionine. This is Homoserine dehydrogenase from Paracoccidioides brasiliensis (strain Pb18).